A 394-amino-acid chain; its full sequence is Elongation factor Tu (394 aa).

Residues 10 to 204 (KPHVNVGTIG…HLDSYIPEPE (195 aa)) form the tr-type G domain. The G1 stretch occupies residues 19-26 (GHVDHGKT). 19 to 26 (GHVDHGKT) is a binding site for GTP. Thr26 contacts Mg(2+). Residues 60-64 (GITIN) are G2. The tract at residues 81-84 (DCPG) is G3. GTP contacts are provided by residues 81–85 (DCPGH) and 136–139 (NKCD). Residues 136-139 (NKCD) form a G4 region. The segment at 174–176 (SAL) is G5.

Belongs to the TRAFAC class translation factor GTPase superfamily. Classic translation factor GTPase family. EF-Tu/EF-1A subfamily. Monomer.

It localises to the cytoplasm. The enzyme catalyses GTP + H2O = GDP + phosphate + H(+). In terms of biological role, GTP hydrolase that promotes the GTP-dependent binding of aminoacyl-tRNA to the A-site of ribosomes during protein biosynthesis. In Cronobacter sakazakii (strain ATCC BAA-894) (Enterobacter sakazakii), this protein is Elongation factor Tu.